Here is a 300-residue protein sequence, read N- to C-terminus: N-acetylmuramic acid 6-phosphate etherase (300 aa).

An SIS domain is found at 57-220 (VSAAFARQGR…SSAAMIRSGK (164 aa)). Glutamate 85 acts as the Proton donor in catalysis. Glutamate 116 is a catalytic residue.

This sequence belongs to the GCKR-like family. MurNAc-6-P etherase subfamily. Homodimer.

It catalyses the reaction N-acetyl-D-muramate 6-phosphate + H2O = N-acetyl-D-glucosamine 6-phosphate + (R)-lactate. It participates in amino-sugar metabolism; N-acetylmuramate degradation. It functions in the pathway amino-sugar metabolism; 1,6-anhydro-N-acetylmuramate degradation. The protein operates within cell wall biogenesis; peptidoglycan recycling. Functionally, specifically catalyzes the cleavage of the D-lactyl ether substituent of MurNAc 6-phosphate, producing GlcNAc 6-phosphate and D-lactate. Together with AnmK, is also required for the utilization of anhydro-N-acetylmuramic acid (anhMurNAc) either imported from the medium or derived from its own cell wall murein, and thus plays a role in cell wall recycling. This Edwardsiella ictaluri (strain 93-146) protein is N-acetylmuramic acid 6-phosphate etherase.